Reading from the N-terminus, the 673-residue chain is ATP-binding cassette sub-family G member 8 (673 aa).

The span at 1–11 (MAGKAAEERGL) shows a compositional bias: basic and acidic residues. The interval 1–25 (MAGKAAEERGLPKGATPQDTSGLQD) is disordered. Residues 1-416 (MAGKAAEERG…ISNDFRDLPT (416 aa)) lie on the Cytoplasmic side of the membrane. In terms of domain architecture, ABC transporter spans 47–313 (LEVRDLNYQV…FTAIGYPCPR (267 aa)). Residues 411-665 (FRDLPTLLIH…VLYYVSLRFI (255 aa)) enclose the ABC transmembrane type-2 domain. A helical transmembrane segment spans residues 417–437 (LLIHGAEACLMSMTIGFLYFG). Over 438 to 447 (HGSIQLSFMD) the chain is Extracellular. Residues 448–468 (TAALLFMIGALIPFNVILDVI) form a helical membrane-spanning segment. Residues 469–497 (SKCYSERAMLYYELEDGLYTTGPYFFAKI) are Cytoplasmic-facing. The chain crosses the membrane as a helical span at residues 498 to 518 (LGELPEHCAYIIIYGMPTYWL). The Extracellular portion of the chain corresponds to 519-527 (ANLRPGLQP). Residues 528 to 548 (FLLHFLLVWLVVFCCRIMALA) traverse the membrane as a helical segment. The Cytoplasmic segment spans residues 549–555 (AAALLPT). Residues 556 to 576 (FHMASFFSNALYNSFYLAGGF) traverse the membrane as a helical segment. Over 577–639 (MINLSSLWTV…LSVMELDSYP (63 aa)) the chain is Extracellular. Asn-619 carries an N-linked (GlcNAc...) asparagine glycan. Residues 640–660 (LYAIYLIVIGLSGGFMVLYYV) traverse the membrane as a helical segment. The Cytoplasmic portion of the chain corresponds to 661–673 (SLRFIKQKPSQDW).

This sequence belongs to the ABC transporter superfamily. ABCG family. Eye pigment precursor importer (TC 3.A.1.204) subfamily. Heterodimer with ABCG8. Requires Mg(2+) as cofactor. Post-translationally, N-glycosylated. Predominantly expressed in the liver. Low expression levels in the small intestine and colon. Very low levels in other tissues, including brain, heart and spleen.

It is found in the cell membrane. The protein localises to the apical cell membrane. The enzyme catalyses cholesterol(in) + ATP + H2O = cholesterol(out) + ADP + phosphate + H(+). It catalyses the reaction sitosterol(in) + ATP + H2O = sitosterol(out) + ADP + phosphate + H(+). Its activity is regulated as follows. The ATPase activity of the heterodimer is stimulated by cholate. Taurocholate, glycocholate, taurochenodeoxycholate, glycochenodeoxycholate and taurodeoxycholate also stimulate ATPase activity, but to a lower degree. Glycodeoxycholate has no significant effect on ATPase activity. ATPase activity is inhibited by vanadate and by berillium fluoride. ABCG5 and ABCG8 form an obligate heterodimer that mediates Mg(2+)- and ATP-dependent sterol transport across the cell membrane. Plays an essential role in the selective transport of the dietary cholesterol in and out of the enterocytes and in the selective sterol excretion by the liver into bile. Required for normal sterol homeostasis. The heterodimer with ABCG5 has ATPase activity. The protein is ATP-binding cassette sub-family G member 8 of Homo sapiens (Human).